Consider the following 374-residue polypeptide: Cell division protein C (374 aa).

The MIT domain occupies 11–73 (ARKYAINAVK…YKRRIEVLKE (63 aa)). ATP is bound at residue 144–151 (GPPGCGKT).

It belongs to the AAA ATPase family. In terms of assembly, interacts with CdvB.

Its subcellular location is the cytoplasm. The protein resides in the nucleoid. In terms of biological role, part of a cell division machinery. The CdvA, CdvB and CdvC proteins polymerize between segregating nucleoids and persist throughout cell division, forming a successively smaller structure during constriction. This is Cell division protein C from Sulfolobus acidocaldarius (strain ATCC 33909 / DSM 639 / JCM 8929 / NBRC 15157 / NCIMB 11770).